The chain runs to 341 residues: uncharacterized protein (341 aa).

This sequence belongs to the Gfo/Idh/MocA family.

This is an uncharacterized protein from Bacillus subtilis (strain 168).